Consider the following 384-residue polypeptide: Monomeric sarcosine oxidase (384 aa).

6 to 36 (DVIVIGLGGMGSAAAHHLSARGARVLGLEKF) provides a ligand contact to FAD. Cys315 carries the S-8alpha-FAD cysteine modification.

Belongs to the MSOX/MTOX family. MSOX subfamily. Monomer. Requires FAD as cofactor.

The protein resides in the cytoplasm. The enzyme catalyses sarcosine + O2 + H2O = formaldehyde + glycine + H2O2. Catalyzes the oxidative demethylation of sarcosine. The chain is Monomeric sarcosine oxidase from Streptomyces avermitilis (strain ATCC 31267 / DSM 46492 / JCM 5070 / NBRC 14893 / NCIMB 12804 / NRRL 8165 / MA-4680).